We begin with the raw amino-acid sequence, 56 residues long: Large ribosomal subunit protein bL32A (56 aa).

The tract at residues 1–56 (MAVPARRTSKAKKNKRRTHKGLTAPGLSRDSETGEYRMSHRISPDGTYKGRTIIEK) is disordered. Positions 7–20 (RTSKAKKNKRRTHK) are enriched in basic residues. The span at 29 to 38 (RDSETGEYRM) shows a compositional bias: basic and acidic residues.

It belongs to the bacterial ribosomal protein bL32 family.

This chain is Large ribosomal subunit protein bL32A (rpmF1), found in Listeria innocua serovar 6a (strain ATCC BAA-680 / CLIP 11262).